The following is a 260-amino-acid chain: Hydroxyacylglutathione hydrolase (260 aa).

Zn(2+) is bound by residues histidine 61, histidine 63, aspartate 65, histidine 66, histidine 119, aspartate 138, and histidine 176.

This sequence belongs to the metallo-beta-lactamase superfamily. Glyoxalase II family. In terms of assembly, monomer. Zn(2+) serves as cofactor.

The catalysed reaction is an S-(2-hydroxyacyl)glutathione + H2O = a 2-hydroxy carboxylate + glutathione + H(+). It participates in secondary metabolite metabolism; methylglyoxal degradation; (R)-lactate from methylglyoxal: step 2/2. Thiolesterase that catalyzes the hydrolysis of S-D-lactoyl-glutathione to form glutathione and D-lactic acid. This Brucella anthropi (strain ATCC 49188 / DSM 6882 / CCUG 24695 / JCM 21032 / LMG 3331 / NBRC 15819 / NCTC 12168 / Alc 37) (Ochrobactrum anthropi) protein is Hydroxyacylglutathione hydrolase.